Consider the following 143-residue polypeptide: Large ribosomal subunit protein uL13 (143 aa).

Belongs to the universal ribosomal protein uL13 family. As to quaternary structure, part of the 50S ribosomal subunit.

In terms of biological role, this protein is one of the early assembly proteins of the 50S ribosomal subunit, although it is not seen to bind rRNA by itself. It is important during the early stages of 50S assembly. The protein is Large ribosomal subunit protein uL13 of Solibacter usitatus (strain Ellin6076).